Reading from the N-terminus, the 591-residue chain is Metastasis-associated protein MTA3 (591 aa).

Positions 1 to 147 (MAANMYRVGD…PSVKTLLADK (147 aa)) constitute a BAH domain. Residues 148 to 258 (GEIRVGPKYQ…SAISVLVPLG (111 aa)) form the ELM2 domain. The SANT domain occupies 265–317 (DEMEEWSASEACLFEEALEKYGKDFNDIRQDFLPWKSLTSIIEYYYMWKTTDR). The segment at 377–404 (CESCYATQSHQWYSWGPPNMQCRLCATC) adopts a GATA-type; atypical zinc-finger fold. The interval 417-456 (PTQSDEEKSPSPTAEDPRARSHMSRQALQGMPVRNTGSPK) is disordered. The segment covering 421–435 (DEEKSPSPTAEDPRA) has biased composition (basic and acidic residues). A phosphoserine mark is found at serine 425 and serine 427. At threonine 452 the chain carries Phosphothreonine. The residue at position 516 (serine 516) is a Phosphoserine.

Belongs to the metastasis-associated protein family. In terms of assembly, component of the nucleosome remodeling and deacetylase (NuRD) repressor complex, composed of core proteins MTA1, MTA2, MTA3, RBBP4, RBBP7, HDAC1, HDAC2, MBD2, MBD3, and peripherally associated proteins CDK2AP1, CDK2AP2, GATAD2A, GATAD2B, CHD3, CHD4 and CHD5. The exact stoichiometry of the NuRD complex is unknown, and some subunits such as MBD2 and MBD3, GATAD2A and GATAD2B, and CHD3, CHD4 and CHD5 define mutually exclusive NuRD complexes. Interacts with BCL6. Interacts with NACC2. Interacts with PWWP2B. Expressed in heart, brain, spleen, lung, liver and kidney.

Its subcellular location is the nucleus. It is found in the cytoplasm. Its function is as follows. Acts as a component of the histone deacetylase NuRD complex which participates in the remodeling of chromatin. Plays a role in maintenance of the normal epithelial architecture through the repression of SNAI1 transcription in a histone deacetylase-dependent manner, and thus the regulation of E-cadherin levels. Contributes to transcriptional repression by BCL6. This is Metastasis-associated protein MTA3 (Mta3) from Mus musculus (Mouse).